Consider the following 184-residue polypeptide: C-phycoerythrin beta chain (184 aa).

(2R,3E)-phycoerythrobilin is bound by residues Cys-48 and Cys-59. N4-methylasparagine is present on Asn-70. (2R,3E)-phycoerythrobilin contacts are provided by Cys-80 and Cys-165.

It belongs to the phycobiliprotein family. Heterodimer of an alpha and a beta chain. Post-translationally, contains three covalently linked bilin chromophores.

Its subcellular location is the cellular thylakoid membrane. Functionally, light-harvesting photosynthetic bile pigment-protein from the phycobiliprotein complex. In Microchaete diplosiphon (Fremyella diplosiphon), this protein is C-phycoerythrin beta chain (cpeB).